Here is a 562-residue protein sequence, read N- to C-terminus: Proton channel OTOP2 (562 aa).

A disordered region spans residues 1–20; sequence MSEELAQGPKESPPAPRAGP. A run of 12 helical transmembrane segments spans residues 30-50, 62-82, 100-120, 137-157, 169-189, 241-261, 289-309, 324-344, 371-391, 402-422, 495-515, and 527-547; these read LLSVLLAVNVLLLACTLISGG, VFALLTAMMLLATLWILFYLL, PIWLRGGLVLFGICTLIMDVF, ILHPLIQAVFVIIQTYFLWVS, TWCGLMFTLTTNLAIWMAAVV, FYLYPFNIEYSLFASTMLYVM, FFAGPVLGLLLFVVGLAVFII, ALVIYYSFNIVCLGLTTLVSL, LLMGAALGQYAISYYSIVAVV, LNLTHALLMIAQHTFQNMFII, DISLFLLLCNVILWIMPAFGA, and FYGYSLWAVIVNICLPFGIFY.

This sequence belongs to the otopetrin family.

The protein localises to the cell membrane. The catalysed reaction is H(+)(in) = H(+)(out). With respect to regulation, actives at neutral and alkaline extracellular pH, acid extracellular pH appears to inhibit the channel. Insensitive to activation by Zn(2+). Proton-selective ion channel open at neutral pH. Actives at neutral and alkaline extracellular pH, likely participates in some alkali-related physiological activities. This is Proton channel OTOP2 from Homo sapiens (Human).